The primary structure comprises 301 residues: MKIGILSQFPELYSTRRLVAACESRGHEAVVINTLNCYMNINSIKPSIHYQGQELTGFDAIIPRIHASVTFYGCAVVRQFEMMGVFAANDSISIARSRDKLRALQLLSRKGIGMPITGFANKPNDIPDLINMVGGAPLVIKLLEGTQGIGVVLAETKTAAESVIEAFLGLKANIMLQEYIKESNGSDIRCFVVGDKVVASMKRQGPEGDFRSNLHLGGCGEKVKITPKERKMAVAAVKAMGLVVAGVDILRSNRGPLILEVNSAPGIEGIEQTTGISVTEPIVEYIEKMVLAQKSNRPVIA.

The region spanning 104–287 is the ATP-grasp domain; it reads LQLLSRKGIG…VTEPIVEYIE (184 aa). Residues Lys-141, 178 to 179, Asp-187, and 211 to 213 contribute to the ATP site; these read EY and RSN. Asp-248, Glu-260, and Asn-262 together coordinate Mg(2+). Residues Asp-248, Glu-260, and Asn-262 each coordinate Mn(2+).

This sequence belongs to the RimK family. Mg(2+) serves as cofactor. The cofactor is Mn(2+).

The chain is Probable alpha-L-glutamate ligase 1 from Shewanella oneidensis (strain ATCC 700550 / JCM 31522 / CIP 106686 / LMG 19005 / NCIMB 14063 / MR-1).